Here is a 551-residue protein sequence, read N- to C-terminus: Protein MTL1 (551 aa).

The N-terminal stretch at 1 to 35 (MASCNPTRKKSSASSLSMWRTILMALTTLPLSVLS) is a signal peptide. At 36–361 (QELVPANSTT…HSGLSKKNRN (326 aa)) the chain is on the extracellular side. Disordered regions lie at residues 108–143 (MQVS…IISS), 206–227 (PSSS…SYSS), and 243–263 (SSSS…SSSS). The helical transmembrane segment at 362–382 (IIIGCVVGIGAPLILILLILI) threads the bilayer. The Cytoplasmic segment spans residues 383–551 (YMFCVQPKKT…PNNGLNITNY (169 aa)). A disordered region spans residues 429–513 (SSDSPIGSNN…SNSNSQDYND (85 aa)). Residues 430 to 441 (SDSPIGSNNIQN) show a composition bias toward polar residues. Residues 466 to 477 (GYDDDDDDDAND) are compositionally biased toward acidic residues. A phosphoserine mark is found at S481 and S482. Low complexity predominate over residues 498 to 508 (SASYSMSNSNS).

The protein belongs to the MID2 like cell wall stress sensor family.

It is found in the membrane. In terms of biological role, involved in cell integrity signaling during vegetative growth at elevated temperature. Acts positively on the PKC1-MAPK pathway. Cell membrane sensor of oxidative stress in the cell integrity pathway upstream of PKC1. Required to transmit the oxidative signal to SLT2 and to restore the correct actin organization following oxidative stress. Multicopy suppressor of 1,3-beta-glucan synthase (GS) mutation. Also suppresses RGD1 null mutations. The protein is Protein MTL1 (MTL1) of Saccharomyces cerevisiae (strain ATCC 204508 / S288c) (Baker's yeast).